The sequence spans 479 residues: ATP synthase subunit beta (479 aa).

168 to 175 (GGAGVGKT) provides a ligand contact to ATP.

This sequence belongs to the ATPase alpha/beta chains family. F-type ATPases have 2 components, CF(1) - the catalytic core - and CF(0) - the membrane proton channel. CF(1) has five subunits: alpha(3), beta(3), gamma(1), delta(1), epsilon(1). CF(0) has three main subunits: a(1), b(2) and c(9-12). The alpha and beta chains form an alternating ring which encloses part of the gamma chain. CF(1) is attached to CF(0) by a central stalk formed by the gamma and epsilon chains, while a peripheral stalk is formed by the delta and b chains.

The protein resides in the cell membrane. The enzyme catalyses ATP + H2O + 4 H(+)(in) = ADP + phosphate + 5 H(+)(out). In terms of biological role, produces ATP from ADP in the presence of a proton gradient across the membrane. The catalytic sites are hosted primarily by the beta subunits. The sequence is that of ATP synthase subunit beta from Parafrankia sp. (strain EAN1pec).